The chain runs to 1112 residues: Plasma membrane calcium-transporting ATPase 2 (1112 aa).

Residues 1–94 (MGDMSNSDFY…NLIPPKKPKT (94 aa)) lie on the Cytoplasmic side of the membrane. The chain crosses the membrane as a helical span at residues 95–115 (FLQLVWEALQDVTLIILEIAA). Residues 116-152 (LISLGLSFYHPPGETGGESCGAAAGGVEDEGEADAGW) are Extracellular-facing. A helical transmembrane segment spans residues 153–173 (IEGAAILLSVVCVVLVTAFND). The Cytoplasmic segment spans residues 174-373 (WSKEKQFRGL…KEKSVLQGKL (200 aa)). The segment covering 298 to 311 (EKKEKKGGAVEDGH) has biased composition (basic and acidic residues). A disordered region spans residues 298-363 (EKKEKKGGAV…KERKKVSAPK (66 aa)). Positions 312-327 (QNTGKMQDGNMESNQI) are enriched in polar residues. The segment covering 351–363 (ADEKERKKVSAPK) has biased composition (basic and acidic residues). The chain crosses the membrane as a helical span at residues 374–393 (TKLAVQIGKAGLLMSAITVI). The Extracellular segment spans residues 394–426 (ILVLYFAIDNFVMQKRPWMPECTPIYIQYFVKF). The helical transmembrane segment at 427–444 (FIIGVTVLVVAVPEGLPL) threads the bilayer. Residues 445–858 (AVTISLAYSV…MWGRNVYDSI (414 aa)) are Cytoplasmic-facing. The active-site 4-aspartylphosphate intermediate is Asp-482. Positions 803 and 807 each coordinate Mg(2+). Residues 859-878 (SKFLQFQLTVNVVAVIVAFT) form a helical membrane-spanning segment. The Extracellular portion of the chain corresponds to 879–888 (GACITQDSPL). A helical membrane pass occupies residues 889 to 909 (KAVQMLWVNLIMDTFASLALA). The Cytoplasmic portion of the chain corresponds to 910–929 (TEPPTESLLKRKPYGRNKPL). Residues 930–952 (ISSTMTKNILGHGVYQLIIIFTL) form a helical membrane-spanning segment. Residues 953–970 (LFVGEQIFDIDSGRNAPL) are Extracellular-facing. The chain crosses the membrane as a helical span at residues 971-992 (HSPPSEHYTIIFNTFVMMQLFN). Residues 993 to 1011 (EINARKIHGERNVFDGIFR) lie on the Cytoplasmic side of the membrane. A helical transmembrane segment spans residues 1012-1033 (NPIFCSIVFGTFAVQIVIVQFG). Residues 1034 to 1043 (GKPFSCQPLD) lie on the Extracellular side of the membrane. A helical membrane pass occupies residues 1044 to 1065 (LEKWMWCVFLGLGELVWGQVIA). Residues 1066–1112 (TIPNSRLRFLRRAGQLTQKDELPEEDVNEENEEIDHAERELRRGQIL) are Cytoplasmic-facing. The tract at residues 1086–1112 (ELPEEDVNEENEEIDHAERELRRGQIL) is disordered. A compositionally biased stretch (acidic residues) spans 1087–1098 (LPEEDVNEENEE). The span at 1099–1112 (IDHAERELRRGQIL) shows a compositional bias: basic and acidic residues. Positions 1106–1112 (LRRGQIL) are calmodulin-binding subdomain A.

Belongs to the cation transport ATPase (P-type) (TC 3.A.3) family. Type IIB subfamily.

It is found in the cell membrane. The catalysed reaction is Ca(2+)(in) + ATP + H2O = Ca(2+)(out) + ADP + phosphate + H(+). Functionally, this magnesium-dependent enzyme catalyzes the hydrolysis of ATP coupled with the transport of calcium out of the cell. The polypeptide is Plasma membrane calcium-transporting ATPase 2 (atp2b2) (Oreochromis mossambicus (Mozambique tilapia)).